Reading from the N-terminus, the 254-residue chain is 3-dehydroquinate dehydratase (254 aa).

Residues 47 to 49 (EFR) and arginine 83 each bind 3-dehydroquinate. Histidine 144 acts as the Proton donor/acceptor in catalysis. Lysine 171 serves as the catalytic Schiff-base intermediate with substrate. Residues arginine 213, serine 232, and glutamine 236 each contribute to the 3-dehydroquinate site.

It belongs to the type-I 3-dehydroquinase family. As to quaternary structure, homodimer.

It catalyses the reaction 3-dehydroquinate = 3-dehydroshikimate + H2O. Its pathway is metabolic intermediate biosynthesis; chorismate biosynthesis; chorismate from D-erythrose 4-phosphate and phosphoenolpyruvate: step 3/7. Involved in the third step of the chorismate pathway, which leads to the biosynthesis of aromatic amino acids. Catalyzes the cis-dehydration of 3-dehydroquinate (DHQ) and introduces the first double bond of the aromatic ring to yield 3-dehydroshikimate. In Neisseria meningitidis serogroup A / serotype 4A (strain DSM 15465 / Z2491), this protein is 3-dehydroquinate dehydratase.